The primary structure comprises 118 residues: Small ribosomal subunit protein uS13 (118 aa).

The tract at residues 93–118 (RGLPVRGQRTKTNARTRKGPRKPIRK) is disordered.

Belongs to the universal ribosomal protein uS13 family. In terms of assembly, part of the 30S ribosomal subunit. Forms a loose heterodimer with protein S19. Forms two bridges to the 50S subunit in the 70S ribosome.

In terms of biological role, located at the top of the head of the 30S subunit, it contacts several helices of the 16S rRNA. In the 70S ribosome it contacts the 23S rRNA (bridge B1a) and protein L5 of the 50S subunit (bridge B1b), connecting the 2 subunits; these bridges are implicated in subunit movement. Contacts the tRNAs in the A and P-sites. This is Small ribosomal subunit protein uS13 from Pseudomonas paraeruginosa (strain DSM 24068 / PA7) (Pseudomonas aeruginosa (strain PA7)).